Consider the following 3564-residue polypeptide: Sushi, von Willebrand factor type A, EGF and pentraxin domain-containing protein 1 (3564 aa).

An N-terminal signal peptide occupies residues 1-17 (MWTRLAFCCWALALVSG). The VWFA domain maps to 84–265 (ELVFLVDESS…LARRALHEDL (182 aa)). Asn187 carries N-linked (GlcNAc...) asparagine glycosylation. Sushi domains follow at residues 377 to 436 (VHCP…FCRV), 437 to 496 (RTCP…RCVE), and 497 to 561 (RHCA…VCKD). Intrachain disulfides connect Cys379–Cys421, Cys407–Cys434, Cys439–Cys481, Cys467–Cys494, Cys499–Cys544, and Cys530–Cys559. HYR domains follow at residues 560–644 (KDVE…KVID) and 645–724 (VEPP…VIKG). The Sushi 4 domain maps to 725–789 (SPCEVPFTPV…YSTEWPDCAI (65 aa)). Disulfide bonds link Cys727–Cys769, Cys753–Cys787, Cys1192–Cys1203, Cys1197–Cys1212, Cys1214–Cys1223, Cys1230–Cys1241, Cys1235–Cys1250, Cys1252–Cys1261, Cys1268–Cys1279, Cys1273–Cys1288, Cys1290–Cys1299, Cys1306–Cys1317, Cys1311–Cys1326, Cys1328–Cys1337, Cys1344–Cys1355, Cys1349–Cys1364, Cys1366–Cys1375, Cys1382–Cys1393, Cys1387–Cys1402, and Cys1404–Cys1413. In terms of domain architecture, EGF-like 1 spans 1188–1224 (VFHECFLNPCHNSGTCQQLGRGYVCLCPPGYTGLKCE). The EGF-like 2; calcium-binding domain occupies 1226–1262 (DIDECSSLPCLNGGICRDKVGGFTCECSSGYTGQICE). One can recognise an EGF-like 3; calcium-binding domain in the interval 1264-1300 (NINECSSSPCLNKGTCTDGLASYRCTCVSGYVGVHCE). Residues 1302–1338 (DVNECQSSPCLNNAVCKDQVGGFSCKCPPGFLGTRCE) enclose the EGF-like 4; calcium-binding domain. In terms of domain architecture, EGF-like 5; calcium-binding spans 1340 to 1376 (NVDECLSQPCQNGATCKDGANSFRCQCPAGFTGPHCE). The EGF-like 6; calcium-binding domain maps to 1378–1414 (NINECQSNPCRNQATCVDELNSYSCKCRPGFSGRRCE). Positions 1419–1623 (SGFNLDFEVS…VKVDSSSIFC (205 aa)) constitute a Pentraxin (PTX) domain. Sushi domains are found at residues 1624-1682 (SDCP…HCER) and 1683-1740 (IRCG…SCLD). Disulfide bonds link Cys1626/Cys1667, Cys1653/Cys1680, Cys1685/Cys1725, Cys1711/Cys1738, Cys1744/Cys1756, Cys1750/Cys1765, Cys1767/Cys1778, Cys1784/Cys1824, Cys1810/Cys1837, Cys1842/Cys1882, Cys1868/Cys1895, Cys1900/Cys1940, Cys1926/Cys1953, Cys1958/Cys1998, Cys1984/Cys2011, Cys2016/Cys2056, Cys2042/Cys2073, Cys2078/Cys2121, Cys2107/Cys2136, Cys2141/Cys2181, Cys2167/Cys2194, Cys2199/Cys2240, Cys2226/Cys2254, Cys2259/Cys2299, Cys2285/Cys2313, Cys2318/Cys2358, Cys2344/Cys2371, Cys2376/Cys2417, Cys2403/Cys2430, Cys2435/Cys2475, Cys2461/Cys2488, Cys2493/Cys2533, Cys2519/Cys2546, Cys2551/Cys2591, and Cys2577/Cys2603. The 40-residue stretch at 1740 to 1779 (DVDECAVGSDCSEHASCLNTNGSYICSCKPPYTGDGKNCA) folds into the EGF-like 7; calcium-binding domain. A glycan (N-linked (GlcNAc...) asparagine) is linked at Asn1760. 14 consecutive Sushi domains span residues 1776–1839 (KNCA…SCEA), 1840–1897 (ISCG…VCEL), 1898–1955 (VKCS…SCQL), 1956–2013 (VSCG…QCLA), 2014–2075 (VSCD…RCIA), 2076–2138 (HFCE…QCIP), 2139–2196 (VRCG…TCHP), 2197–2256 (VSCN…SCTP), 2257–2315 (LNCG…KCVP), 2316–2373 (TKCA…VCKL), 2374–2432 (VLCQ…ECVP), 2433–2490 (VECP…MCRP), 2491–2548 (IECP…SCNA), and 2549–2605 (IHCS…TCVP). Residues 2634-2641 (DMMEVPYL) form an important for the interaction with integrin ITGA9:ITGB1 region. 14 Sushi domains span residues 2659-2708 (EESL…SCIS), 2709-2766 (IECD…RCEV), 2767-2824 (ISCS…VCLP), 2825-2882 (VDCG…SCVP), 2883-2940 (VRCP…ICKP), 2941-2998 (ATCG…SCLP), 2999-3054 (CTCS…LCEH), 3055-3112 (ADCG…TCEP), 3113-3171 (VSCG…NCSP), 3172-3231 (KTCP…SCIP), 3232-3289 (VVCG…VCRE), 3290-3347 (SRCE…LCKP), 3348-3406 (NPCP…RCEK), and 3407-3463 (ISCG…ICRA). 33 disulfide bridges follow: Cys2679–Cys2706, Cys2711–Cys2751, Cys2737–Cys2764, Cys2769–Cys2809, Cys2795–Cys2822, Cys2827–Cys2867, Cys2853–Cys2880, Cys2885–Cys2925, Cys2911–Cys2938, Cys2943–Cys2983, Cys2969–Cys2996, Cys3001–Cys3040, Cys3026–Cys3052, Cys3057–Cys3097, Cys3083–Cys3110, Cys3115–Cys3156, Cys3141–Cys3169, Cys3174–Cys3214, Cys3200–Cys3229, Cys3234–Cys3274, Cys3260–Cys3287, Cys3292–Cys3332, Cys3318–Cys3345, Cys3350–Cys3391, Cys3377–Cys3404, Cys3409–Cys3449, Cys3435–Cys3461, Cys3497–Cys3507, Cys3501–Cys3513, Cys3515–Cys3524, Cys3529–Cys3539, Cys3533–Cys3545, and Cys3547–Cys3556. 2 consecutive EGF-like domains span residues 3493-3525 (EEPICILPCLNGGRCVAPYRCDCPAGWTGSRCH) and 3526-3557 (TATCQSPCLNGGKCVRPNRCHCLSSWTGHDCS).

Interacts (via Sushi domain 21) with ITGA9:ITGB1; thereby inhibits Ca(2+) intracellular signaling and as a result represses vasocontraction. Interacts (via Sushi domain 21) with ITGA4:ITGB1; thereby inhibits Ca(2+) intracellular signaling and as a result represses vasocontraction. Interacts with ANGPT1 and ANGPT2. Interacts with PEAR1 (via extracellular domain). Interacts with HSPG2, TLN1, FN1, COPA, CCT2, IQGAP1, LAMC1 and NID1. Interacts (via C-terminus) with TIE1.

It localises to the secreted. The protein resides in the nucleus. Its subcellular location is the cytoplasm. It is found in the membrane. In terms of biological role, required for morphological development, cell alignment and migration of lymphatic endothelial cells during embryonic development, potentially via modulation of ANGPT2-TIE1 signaling and subsequent activation of FOXC2 transcription. Required for embryonic lymphatic vascular development, via mediating the correct formation of the first lymphovenous contact site and tight association of the lymphatic endothelium with the venous endothelium. Represses PRKCA-mediated L-type voltage-gated channel Ca(2+) influx and ROCK-mediated calcium sensitivity in vascular smooth muscle cells, via its interaction with integrins, thereby inhibiting vasocontraction. Promotes platelet activation, via its interaction with PEAR1 and subsequent activation of AKT/mTOR signaling. Plays a role in epidermal development and keratinocyte differentiation, independent of cell-cell adhesion. May play a role in initial cell attachment of stromal osteogenic cells. May promote myoblast cell adhesion when in the presence of integrin ITGA9:ITGB1. This is Sushi, von Willebrand factor type A, EGF and pentraxin domain-containing protein 1 (Svep1) from Rattus norvegicus (Rat).